The following is a 145-amino-acid chain: MPAPAATQTATLNKFIDGWKGWTPDGFLASWSDDCAQVTLPFSSGVPPRTRAITEKLFPKLMSILTNFQLTVHNVIHEPAESKAVIYAITTADSPFGPYKNEHACFVWFDESGESVNRIEEMFDGVFMKGFLPKLEAYIKGQEEA.

The protein belongs to the avfA family.

The protein operates within secondary metabolite biosynthesis. In terms of biological role, monooxygenase; part of the gene cluster that mediates the biosynthesis of the tetrahydroxanthone dimer secalonic acid D. The pathway begins with the synthesis of atrochrysone thioester by the polyketide synthase AacuL. The atrochrysone carboxyl ACP thioesterase AacuM then breaks the thioester bond and releases the atrochrysone carboxylic acid from AacuL. Atrochrysone carboxylic acid is decarboxylated by the decarboxylase AacuI, and oxidized by the anthrone oxygenase AacuG to yield emodin. Emodin is then reduced to emodin hydroquinone by a yet unidentified oxidoreductase. A-ring reduction by the short chain dehydrogenase AacuN, dehydration by the scytalone dehydratase-like protein AacuK and probable spontaneous re-oxidation, results in overall deoxygenation to chrysophanol. Baeyer-Villiger oxidation by the Baeyer-Villiger monooxygenase (BVMO) AacuH then yields monodictyphenone. Monodictyphenone is transformed into compounds with the tetrahydroxanthone skeleton via methylesterification by the methyltransferase AacuQ, followed by the action of the flavin-dependent monooxygenase AacuC, the isomerase AacuP, and the short chain dehydrogenase/reductase AacuF or AacuD. AacuF and AacuD should accept the same compound as a substrate but perform the ketoreduction with a different stereoselectivity, thus yielding blennolides B and A, respectively. In the final step of the biosynthesis, the cytochrome P450 monooxygenase AacuE accepts blennolide B and/or blennolide A to conduct the dimerization reaction to furnish the tetrahydroxanthone dimers, secalonic acids D, B, and F. This is Monooxygenase AacuP from Aspergillus aculeatus (strain ATCC 16872 / CBS 172.66 / WB 5094).